A 683-amino-acid chain; its full sequence is MSALNSLPLPVVRLLAFFHEELSERRPGRVPQTVQLWVGCLLVILISMTFEIPFVALSLAVLFYGIQSNAFYTKFVAILFVVATVLEIGSLFLIYKWSYGEPLIRLIIAGPILMGCMFLMRTHRLGLVFFAVAIVAIYGQTFPAMLDYPEVVVRLTLWCIVVGLYPTLLMTLIGVLWFPSRAISQMHQALNDRLDDAISHLTDSLAPLPETRIEREALALQKLNVFCLADDANWRTQSAWWQSCVATVTYIYSTLNRYDPTSFADSQAIIEFRQKLASEINKLQHAITEGQCWQSDWRISESEAMAARECNLENICQTLLQLGQMDPNTPPTPAAKPPSMVADAFTNPDYMRYAVKTLLACLICYTFYSGVDWEGIHTCMLTCVIVANPNVGSSYQKMVLRFGGAFCGAILALLFTLLVMPWLDNIVELLFVLAPIFLLGAWIATSSERSSYIGTQMVVTFALATLENVFGPVYDLVEIRDRALGIIIGTVVSAVIYTFVWPESEARTLPQKLAGALGMLSKVMRIPRQQEVTALRTYLQIRIGLHAAFNACEEMCQRVALERQLDSEERALLIERSQTVIHQGRDLLHAWDATWNSAQALDNALQPDKAGQFADALEKYAAGLATALSRSPQITLEETPASQAILPTLLKQEQHVCQLFARLPDWTAPALTPATEQAQGATQ.

Helical transmembrane passes span 43-63 (VILI…AVLF), 75-95 (FVAI…FLIY), 100-120 (GEPL…MFLM), 125-145 (LGLV…FPAM), 158-178 (WCIV…VLWF), 402-422 (FGGA…VMPW), 426-446 (IVEL…IATS), 457-477 (MVVT…YDLV), and 483-503 (ALGI…VWPE).

Belongs to the MdtO family. Could be part of a tripartite efflux system composed of MdtN, MdtO and MdtP.

It localises to the cell inner membrane. In terms of biological role, could be involved in resistance to puromycin, acriflavine and tetraphenylarsonium chloride. This Escherichia coli O157:H7 protein is Multidrug resistance protein MdtO (mdtO).